A 538-amino-acid polypeptide reads, in one-letter code: Nectin-2 (538 aa).

A signal peptide spans 1–31 (MARAAALLPSRSPPTPLLWPLLLLLLLETGA). Positions 32 to 156 (QDVRVQVLPE…KGSVRGMTWL (125 aa)) constitute an Ig-like V-type domain. Topologically, residues 32 to 360 (QDVRVQVLPE…NTAGAGATGG (329 aa)) are extracellular. 3 cysteine pairs are disulfide-bonded: C54-C140, C183-C238, and C283-C329. Residue N137 is glycosylated (N-linked (GlcNAc...) asparagine). Ig-like C2-type domains lie at 162–256 (PKNQ…VTLS) and 261–345 (PEVS…QVIF). N-linked (GlcNAc...) asparagine glycosylation occurs at N324. A helical membrane pass occupies residues 361-381 (IIGGIIAAIIATAVAATGILI). Residues 382–538 (CRQQRKEQTL…GFVMSRAMYV (157 aa)) lie on the Cytoplasmic side of the membrane. The tract at residues 390 to 414 (TLQGAEEDEDLEGPPSYKPPTPKAK) is disordered. T410 carries the post-translational modification Phosphothreonine. S433, G465, and G470 each carry phosphoserine. Residues 462-489 (ERSGPLHPGATSLGSPIPVPPGPPAVED) form a disordered region.

It belongs to the nectin family. In terms of assembly, can form trans-heterodimers with NECTIN3. Interacts with CD226 or with PVRIG; these interactions are competitive and have a differential functional outcome on T-cell activation, either positive or negative, respectively. Binds with low affinity to TIGIT. As to quaternary structure, (Microbial infection) Interacts with herpes simplex virus 1 (HHV-1) mutant Rid1, herpes simplex virus 1 (HHV-2) and pseudorabies virus (PRV) envelope glycoprotein D. As to expression, ubiquitous.

It is found in the cell membrane. Functionally, modulator of T-cell signaling. Can be either a costimulator of T-cell function, or a coinhibitor, depending on the receptor it binds to. Upon binding to CD226, stimulates T-cell proliferation and cytokine production, including that of IL2, IL5, IL10, IL13, and IFNG. Upon interaction with PVRIG, inhibits T-cell proliferation. These interactions are competitive. Probable cell adhesion protein. (Microbial infection) Acts as a receptor for herpes simplex virus 1 (HHV-1) mutant Rid1, herpes simplex virus 1 (HHV-2) and pseudorabies virus (PRV). This Homo sapiens (Human) protein is Nectin-2.